The following is a 24-amino-acid chain: Neurotoxin-2 (24 aa).

One can recognise an LCN-type CS-alpha/beta domain in the interval 1 to 24 (EDGYLLNRDTGCKVSCGTCRYCND).

It belongs to the long (4 C-C) scorpion toxin superfamily. Sodium channel inhibitor family. Alpha subfamily. In terms of tissue distribution, expressed by the venom gland.

The protein resides in the secreted. Binds to sodium channels (Nav) and inhibits the inactivation of the activated channels, thereby blocking neuronal transmission. This toxin is active against mammals. The protein is Neurotoxin-2 of Hottentotta tamulus (Eastern Indian scorpion).